A 199-amino-acid polypeptide reads, in one-letter code: uncharacterized protein (199 aa).

The next 4 membrane-spanning stretches (helical) occupy residues 41–61 (LFIPPSACRIDLSVFPWAFIC), 72–92 (SLICSPCFSTVWVSLLICSPW), 109–129 (TVWVNLLICSPWAAKVVSIFV), and 145–165 (VTYSVFTGITGLLSLNCLLNL).

This sequence to M.pneumoniae MPN_037.

The protein resides in the cell membrane. This is an uncharacterized protein from Mycoplasma pneumoniae (strain ATCC 29342 / M129 / Subtype 1) (Mycoplasmoides pneumoniae).